Here is a 337-residue protein sequence, read N- to C-terminus: Ketol-acid reductoisomerase (NADP(+)) (337 aa).

The KARI N-terminal Rossmann domain occupies 1–183 (MAIETLYDSD…GGARAGVIPT (183 aa)). NADP(+) is bound by residues 26 to 29 (YGSQ), arginine 49, serine 52, serine 54, and 84 to 87 (DTSQ). Residue histidine 109 is part of the active site. NADP(+) is bound at residue glycine 135. In terms of domain architecture, KARI C-terminal knotted spans 184 to 329 (TFKDETETDL…SQLRDLMSWV (146 aa)). Mg(2+) contacts are provided by aspartate 192, glutamate 196, glutamate 228, and glutamate 232. Serine 253 provides a ligand contact to substrate.

This sequence belongs to the ketol-acid reductoisomerase family. It depends on Mg(2+) as a cofactor.

The catalysed reaction is (2R)-2,3-dihydroxy-3-methylbutanoate + NADP(+) = (2S)-2-acetolactate + NADPH + H(+). It catalyses the reaction (2R,3R)-2,3-dihydroxy-3-methylpentanoate + NADP(+) = (S)-2-ethyl-2-hydroxy-3-oxobutanoate + NADPH + H(+). It functions in the pathway amino-acid biosynthesis; L-isoleucine biosynthesis; L-isoleucine from 2-oxobutanoate: step 2/4. Its pathway is amino-acid biosynthesis; L-valine biosynthesis; L-valine from pyruvate: step 2/4. Involved in the biosynthesis of branched-chain amino acids (BCAA). Catalyzes an alkyl-migration followed by a ketol-acid reduction of (S)-2-acetolactate (S2AL) to yield (R)-2,3-dihydroxy-isovalerate. In the isomerase reaction, S2AL is rearranged via a Mg-dependent methyl migration to produce 3-hydroxy-3-methyl-2-ketobutyrate (HMKB). In the reductase reaction, this 2-ketoacid undergoes a metal-dependent reduction by NADPH to yield (R)-2,3-dihydroxy-isovalerate. The sequence is that of Ketol-acid reductoisomerase (NADP(+)) from Corynebacterium aurimucosum (strain ATCC 700975 / DSM 44827 / CIP 107346 / CN-1) (Corynebacterium nigricans).